The chain runs to 180 residues: MSRIGKMPVQLADQAKIEIKDNVITVSGPKGTLQQQLVPEVSVDIADGQITVTRADDTKRSRAMHGLYRMLVSNMVDGVTKGFTRKLLISGVGFRAEMKSDLLALTLGYSHQIYFKAPEEVTIACPDPTTIEISGIDKALVGQVAAKIRSFRKPEPYRGKGIKFSDEVVRRKEGKTAGKK.

This sequence belongs to the universal ribosomal protein uL6 family. As to quaternary structure, part of the 50S ribosomal subunit.

In terms of biological role, this protein binds to the 23S rRNA, and is important in its secondary structure. It is located near the subunit interface in the base of the L7/L12 stalk, and near the tRNA binding site of the peptidyltransferase center. The chain is Large ribosomal subunit protein uL6 from Prosthecochloris aestuarii (strain DSM 271 / SK 413).